The chain runs to 196 residues: Zinc metalloproteinase-disintegrin-like bothrojarin-3 (196 aa).

Positions 2 to 88 constitute a Disintegrin domain; it reads PPVCGTELLE…DCPTDDIQRN (87 aa). Ca(2+) contacts are provided by valine 4, leucine 9, glutamate 11, glutamate 14, and aspartate 17. Cystine bridges form between cysteine 5/cysteine 34, cysteine 16/cysteine 29, cysteine 18/cysteine 24, cysteine 28/cysteine 51, cysteine 42/cysteine 48, cysteine 47/cysteine 73, cysteine 60/cysteine 80, cysteine 67/cysteine 99, cysteine 92/cysteine 104, cysteine 111/cysteine 161, cysteine 126/cysteine 168, cysteine 139/cysteine 149, and cysteine 156/cysteine 193. A D/ECD-tripeptide motif is present at residues 66 to 68; that stretch reads ECD.

This sequence belongs to the venom metalloproteinase (M12B) family. P-III subfamily. P-IIIa sub-subfamily. Monomer. It depends on Zn(2+) as a cofactor. Glycosylated. As to expression, expressed by the venom gland.

It is found in the secreted. In terms of biological role, the hemorrhagic metalloproteinase-disintegrin-like bothrojarin-1 is a potent inhibitor of collagen-induced platelet aggregation by blockage of alpha-2/beta-1 (ITGA2/ITGB1) integrin. It does not present any fibrinogen-clotting activity. The sequence is that of Zinc metalloproteinase-disintegrin-like bothrojarin-3 from Bothrops jararaca (Jararaca).